The chain runs to 72 residues: Neuropeptide SIFamide (72 aa).

The signal sequence occupies residues 1 to 26 (MALRFTLTLLLVTILVAAILLGSSEA). Asparagine 34 is a glycosylation site (N-linked (GlcNAc...) asparagine). Phenylalanine 38 is subject to Phenylalanine amide. A propeptide spanning residues 42–72 (NSLDYDSAKMSAVCEVAMEACPMWFPQNDSK) is cleaved from the precursor.

This sequence belongs to the FARP (FMRFamide related peptide) family. In terms of tissue distribution, strongly expressed in two pairs of neurons in the pars intercerebralis (at protein level).

The protein resides in the secreted. Functionally, ligand for the neuropeptide SIFamide receptor. Modulates sexual behavior by negatively regulating female receptivity to male courtship and by playing a role in male sex discrimination. Also involved in promoting sleep. This chain is Neuropeptide SIFamide, found in Drosophila melanogaster (Fruit fly).